A 243-amino-acid polypeptide reads, in one-letter code: Putative ABC transporter arginine-binding protein 2 (243 aa).

The first 19 residues, 1 to 19 (MKKVLIAALIAGFSLSATA), serve as a signal peptide directing secretion.

The protein belongs to the bacterial solute-binding protein 3 family. In terms of assembly, the complex is composed of two ATP-binding proteins (ArtP), two transmembrane proteins (ArtM and ArtQ) and two solute-binding proteins (ArtJ and ArtI).

Its subcellular location is the periplasm. Part of the ABC transporter complex ArtPIQMJ involved in arginine transport. In Escherichia coli (strain K12), this protein is Putative ABC transporter arginine-binding protein 2 (artI).